Here is a 718-residue protein sequence, read N- to C-terminus: 1-deoxy-D-xylulose-5-phosphate synthase 1, chloroplastic (718 aa).

The transit peptide at methionine 1–tyrosine 55 directs the protein to the chloroplast. Residues histidine 143 and glycine 184–serine 186 contribute to the thiamine diphosphate site. Aspartate 215 lines the Mg(2+) pocket. Thiamine diphosphate contacts are provided by residues glycine 216–alanine 217, asparagine 244, tyrosine 365, and glutamate 447. Asparagine 244 is a Mg(2+) binding site.

This sequence belongs to the transketolase family. DXPS subfamily. As to quaternary structure, homodimer. Mg(2+) serves as cofactor. Thiamine diphosphate is required as a cofactor. Expressed in trichomes, leaves, flowers, roots and stems.

It localises to the plastid. The protein localises to the chloroplast. It catalyses the reaction D-glyceraldehyde 3-phosphate + pyruvate + H(+) = 1-deoxy-D-xylulose 5-phosphate + CO2. Its pathway is metabolic intermediate biosynthesis; 1-deoxy-D-xylulose 5-phosphate biosynthesis; 1-deoxy-D-xylulose 5-phosphate from D-glyceraldehyde 3-phosphate and pyruvate: step 1/1. Functionally, catalyzes the acyloin condensation reaction between C atoms 2 and 3 of pyruvate and glyceraldehyde 3-phosphate to yield 1-deoxy-D-xylulose-5-phosphate (DXP). This chain is 1-deoxy-D-xylulose-5-phosphate synthase 1, chloroplastic, found in Cannabis sativa (Hemp).